The sequence spans 796 residues: Phenylalanine--tRNA ligase beta subunit (796 aa).

Residues 39-149 (SAALKSFRVA…GDAPLGTTFA (111 aa)) form the tRNA-binding domain. Residues 398 to 470 (LARKALAYDP…RVHGLDAVPS (73 aa)) form the B5 domain. Residues aspartate 448, aspartate 454, glutamate 457, and glutamate 458 each coordinate Mg(2+). The FDX-ACB domain maps to 703 to 795 (PALQAVTRDF…AAGKLGAELR (93 aa)).

The protein belongs to the phenylalanyl-tRNA synthetase beta subunit family. Type 1 subfamily. In terms of assembly, tetramer of two alpha and two beta subunits. It depends on Mg(2+) as a cofactor.

The protein localises to the cytoplasm. It catalyses the reaction tRNA(Phe) + L-phenylalanine + ATP = L-phenylalanyl-tRNA(Phe) + AMP + diphosphate + H(+). This Novosphingobium aromaticivorans (strain ATCC 700278 / DSM 12444 / CCUG 56034 / CIP 105152 / NBRC 16084 / F199) protein is Phenylalanine--tRNA ligase beta subunit.